The primary structure comprises 1117 residues: Isoleucine--tRNA ligase (1117 aa).

Positions 64–74 match the 'HIGH' region motif; it reads PFANGLPHYGH. Residues 647–651 carry the 'KMSKS' region motif; that stretch reads KLSKR. ATP is bound at residue Lys650.

Belongs to the class-I aminoacyl-tRNA synthetase family. IleS type 2 subfamily. In terms of assembly, monomer. Zn(2+) serves as cofactor.

The protein localises to the cytoplasm. The enzyme catalyses tRNA(Ile) + L-isoleucine + ATP = L-isoleucyl-tRNA(Ile) + AMP + diphosphate. In terms of biological role, catalyzes the attachment of isoleucine to tRNA(Ile). As IleRS can inadvertently accommodate and process structurally similar amino acids such as valine, to avoid such errors it has two additional distinct tRNA(Ile)-dependent editing activities. One activity is designated as 'pretransfer' editing and involves the hydrolysis of activated Val-AMP. The other activity is designated 'posttransfer' editing and involves deacylation of mischarged Val-tRNA(Ile). The polypeptide is Isoleucine--tRNA ligase (Ehrlichia ruminantium (strain Welgevonden)).